Reading from the N-terminus, the 476-residue chain is Inactive glucose-1-phosphate adenylyltransferase small subunit 2, chloroplastic (476 aa).

The N-terminal 55 residues, 1 to 55 (MQISSSSFITKFTNLHMVRSTSDHHQWRHNYNLKQLFIPNLSVSNSQHLPLNQSV), are a transit peptide targeting the chloroplast.

This sequence belongs to the bacterial/plant glucose-1-phosphate adenylyltransferase family. In terms of assembly, heterotetramer. As to expression, expressed at very low levels in leaves, inflorescences, fruits, and roots.

It localises to the plastid. The protein resides in the chloroplast. This chain is Inactive glucose-1-phosphate adenylyltransferase small subunit 2, chloroplastic, found in Arabidopsis thaliana (Mouse-ear cress).